The chain runs to 345 residues: 3-isopropylmalate dehydrogenase (345 aa).

74–87 (GPKWDGLPRKIRPE) contributes to the NAD(+) binding site. Residues R94, R104, R132, and D217 each contribute to the substrate site. Positions 217, 241, and 245 each coordinate Mg(2+). Residue 274 to 286 (GSAPDIAGKGIAN) coordinates NAD(+).

It belongs to the isocitrate and isopropylmalate dehydrogenases family. LeuB type 1 subfamily. As to quaternary structure, homodimer. Mg(2+) serves as cofactor. Requires Mn(2+) as cofactor.

The protein localises to the cytoplasm. The enzyme catalyses (2R,3S)-3-isopropylmalate + NAD(+) = 4-methyl-2-oxopentanoate + CO2 + NADH. It participates in amino-acid biosynthesis; L-leucine biosynthesis; L-leucine from 3-methyl-2-oxobutanoate: step 3/4. In terms of biological role, catalyzes the oxidation of 3-carboxy-2-hydroxy-4-methylpentanoate (3-isopropylmalate) to 3-carboxy-4-methyl-2-oxopentanoate. The product decarboxylates to 4-methyl-2 oxopentanoate. The polypeptide is 3-isopropylmalate dehydrogenase (leuB) (Thermus thermophilus (strain ATCC 27634 / DSM 579 / HB8)).